Here is a 37-residue protein sequence, read N- to C-terminus: Potassium channel toxin alpha-KTx 2.19 (37 aa).

Cystine bridges form between C7/C28, C13/C33, and C17/C35.

As to expression, expressed by the venom gland.

Its subcellular location is the secreted. Inhibitor of voltage-gated potassium channels. The polypeptide is Potassium channel toxin alpha-KTx 2.19 (Rhopalurus junceus (Caribbean blue scorpion)).